Consider the following 1212-residue polypeptide: DNA-directed RNA polymerase subunit beta'' (1212 aa).

Zn(2+) is bound by residues Cys229, Cys302, Cys309, and Cys312. The segment at 1162 to 1212 (QKETSKNKKETSKNKKETSKNKKETSKNKKETSKNKKETSKNKKEASKNKK) is disordered.

This sequence belongs to the RNA polymerase beta' chain family. RpoC2 subfamily. As to quaternary structure, in plastids the minimal PEP RNA polymerase catalytic core is composed of four subunits: alpha, beta, beta', and beta''. When a (nuclear-encoded) sigma factor is associated with the core the holoenzyme is formed, which can initiate transcription. It depends on Zn(2+) as a cofactor.

It localises to the plastid. The protein localises to the chloroplast. It carries out the reaction RNA(n) + a ribonucleoside 5'-triphosphate = RNA(n+1) + diphosphate. DNA-dependent RNA polymerase catalyzes the transcription of DNA into RNA using the four ribonucleoside triphosphates as substrates. In Cryptomeria japonica (Japanese cedar), this protein is DNA-directed RNA polymerase subunit beta''.